The primary structure comprises 214 residues: Small ribosomal subunit protein uS5 (214 aa).

Residues 54-117 form the S5 DRBM domain; the sequence is LKYEVMDIKI…KNAKMNIIPV (64 aa).

Belongs to the universal ribosomal protein uS5 family. As to quaternary structure, part of the 30S ribosomal subunit. Contacts protein S4.

In terms of biological role, with S4 and S12 plays an important role in translational accuracy. The sequence is that of Small ribosomal subunit protein uS5 from Sulfurisphaera tokodaii (strain DSM 16993 / JCM 10545 / NBRC 100140 / 7) (Sulfolobus tokodaii).